The following is a 499-amino-acid chain: Maturase K (499 aa).

Belongs to the intron maturase 2 family. MatK subfamily.

It is found in the plastid. It localises to the chloroplast. Functionally, usually encoded in the trnK tRNA gene intron. Probably assists in splicing its own and other chloroplast group II introns. The sequence is that of Maturase K from Neltuma juliflora (Mesquite).